Consider the following 383-residue polypeptide: uncharacterized protein (383 aa).

This sequence belongs to the peptidase M20 family.

This is an uncharacterized protein from Staphylococcus haemolyticus (strain JCSC1435).